The chain runs to 173 residues: DNA-directed RNA polymerase subunit delta (173 aa).

The 68-residue stretch at 14–81 folds into the HTH HARE-type domain; it reads MALVEIAHEL…SDQTWGLRSW (68 aa). The disordered stretch occupies residues 110-173; the sequence is LDLDEFEEID…DYDDEEEEIK (64 aa).

It belongs to the RpoE family. As to quaternary structure, RNAP is composed of a core of 2 alpha, a beta and a beta' subunit. The core is associated with a delta subunit, and at least one of epsilon or omega. When a sigma factor is associated with the core the holoenzyme is formed, which can initiate transcription.

Functionally, participates in both the initiation and recycling phases of transcription. In the presence of the delta subunit, RNAP displays an increased specificity of transcription, a decreased affinity for nucleic acids, and an increased efficiency of RNA synthesis because of enhanced recycling. May function in sigma factor switching. It displaces RNA bound to RNA polymerase in a binary complex. The chain is DNA-directed RNA polymerase subunit delta from Bacillus subtilis (strain 168).